Reading from the N-terminus, the 452-residue chain is Metacaspase-1 (452 aa).

The interval 1 to 97 (MYPGAGRPTY…GPPLQGRPRD (97 aa)) is disordered. Low complexity predominate over residues 16–41 (QKGPYGQPQYQQQYAPPYPERYQQPY). Residues H238 and C294 contribute to the active site.

Belongs to the peptidase C14B family.

Functionally, involved in cell death (apoptosis). The chain is Metacaspase-1 (MCA1) from Eremothecium gossypii (strain ATCC 10895 / CBS 109.51 / FGSC 9923 / NRRL Y-1056) (Yeast).